Here is a 630-residue protein sequence, read N- to C-terminus: DNA topoisomerase 4 subunit B (630 aa).

Residues tyrosine 5, asparagine 42, aspartate 69, 110–116 (GLHGVGI), and lysine 334 contribute to the ATP site. A Toprim domain is found at 412-525 (TELFLVEGDS…NGHVYVALPP (114 aa)). Positions 418, 490, and 492 each coordinate Mg(2+).

Belongs to the type II topoisomerase family. ParE type 1 subfamily. As to quaternary structure, heterotetramer composed of ParC and ParE. It depends on Mg(2+) as a cofactor. Requires Mn(2+) as cofactor. Ca(2+) serves as cofactor.

It carries out the reaction ATP-dependent breakage, passage and rejoining of double-stranded DNA.. Functionally, topoisomerase IV is essential for chromosome segregation. It relaxes supercoiled DNA. Performs the decatenation events required during the replication of a circular DNA molecule. This is DNA topoisomerase 4 subunit B from Salmonella typhi.